Reading from the N-terminus, the 400-residue chain is Nicotinate phosphoribosyltransferase (400 aa).

Histidine 220 bears the Phosphohistidine; by autocatalysis mark.

Belongs to the NAPRTase family. In terms of processing, transiently phosphorylated on a His residue during the reaction cycle. Phosphorylation strongly increases the affinity for substrates and increases the rate of nicotinate D-ribonucleotide production. Dephosphorylation regenerates the low-affinity form of the enzyme, leading to product release.

The catalysed reaction is nicotinate + 5-phospho-alpha-D-ribose 1-diphosphate + ATP + H2O = nicotinate beta-D-ribonucleotide + ADP + phosphate + diphosphate. It participates in cofactor biosynthesis; NAD(+) biosynthesis; nicotinate D-ribonucleotide from nicotinate: step 1/1. Its function is as follows. Catalyzes the synthesis of beta-nicotinate D-ribonucleotide from nicotinate and 5-phospho-D-ribose 1-phosphate at the expense of ATP. The chain is Nicotinate phosphoribosyltransferase from Escherichia coli O17:K52:H18 (strain UMN026 / ExPEC).